A 278-amino-acid chain; its full sequence is Ribosomal RNA small subunit methyltransferase J (278 aa).

S-adenosyl-L-methionine is bound by residues 143-144 and aspartate 197; that span reads ER.

This sequence belongs to the methyltransferase superfamily. RsmJ family.

Its subcellular location is the cytoplasm. It catalyses the reaction guanosine(1516) in 16S rRNA + S-adenosyl-L-methionine = N(2)-methylguanosine(1516) in 16S rRNA + S-adenosyl-L-homocysteine + H(+). Specifically methylates the guanosine in position 1516 of 16S rRNA. This chain is Ribosomal RNA small subunit methyltransferase J, found in Marinobacter nauticus (strain ATCC 700491 / DSM 11845 / VT8) (Marinobacter aquaeolei).